A 73-amino-acid polypeptide reads, in one-letter code: uncharacterized protein (73 aa).

Residues 54–72 (VSFIVAPTVMQVQCLFFFI) form a helical membrane-spanning segment.

The protein resides in the membrane. This is an uncharacterized protein from Saccharomyces cerevisiae (strain ATCC 204508 / S288c) (Baker's yeast).